The following is a 496-amino-acid chain: Probable CtpA-like serine protease (496 aa).

The span at 1–16 (MDDKQHTSSSDDERAE) shows a compositional bias: basic and acidic residues. The segment at 1–27 (MDDKQHTSSSDDERAEIATSNQDQQTN) is disordered. Residues 18–27 (ATSNQDQQTN) are compositionally biased toward polar residues. A helical transmembrane segment spans residues 39 to 59 (FISILIGTILITAVITVVAYI). Residues 124–206 (TKSFNEGVSG…TEVTLTVQRG (83 aa)) form the PDZ domain. Catalysis depends on charge relay system residues serine 329, aspartate 340, and lysine 354.

Belongs to the peptidase S41A family.

It localises to the cell membrane. The sequence is that of Probable CtpA-like serine protease from Staphylococcus aureus (strain bovine RF122 / ET3-1).